Consider the following 66-residue polypeptide: ATP synthase F(0) complex subunit 8 (66 aa).

The chain crosses the membrane as a helical span at residues 8 to 24 (IWLLAVVIVLTTLMIFL). Lys-54 carries the N6-acetyllysine; alternate modification. At Lys-54 the chain carries N6-succinyllysine; alternate. Lys-57 bears the N6-acetyllysine mark.

This sequence belongs to the ATPase protein 8 family. Component of the ATP synthase complex composed at least of ATP5F1A/subunit alpha, ATP5F1B/subunit beta, ATP5MC1/subunit c (homooctomer), MT-ATP6/subunit a, MT-ATP8/subunit 8, ATP5ME/subunit e, ATP5MF/subunit f, ATP5MG/subunit g, ATP5MK/subunit k, ATP5MJ/subunit j, ATP5F1C/subunit gamma, ATP5F1D/subunit delta, ATP5F1E/subunit epsilon, ATP5PF/subunit F6, ATP5PB/subunit b, ATP5PD/subunit d, ATP5PO/subunit OSCP. ATP synthase complex consists of a soluble F(1) head domain (subunits alpha(3) and beta(3)) - the catalytic core - and a membrane F(0) domain - the membrane proton channel (subunits c, a, 8, e, f, g, k and j). These two domains are linked by a central stalk (subunits gamma, delta, and epsilon) rotating inside the F1 region and a stationary peripheral stalk (subunits F6, b, d, and OSCP). Interacts with PRICKLE3.

It localises to the mitochondrion membrane. Its function is as follows. Subunit 8, of the mitochondrial membrane ATP synthase complex (F(1)F(0) ATP synthase or Complex V) that produces ATP from ADP in the presence of a proton gradient across the membrane which is generated by electron transport complexes of the respiratory chain. ATP synthase complex consist of a soluble F(1) head domain - the catalytic core - and a membrane F(1) domain - the membrane proton channel. These two domains are linked by a central stalk rotating inside the F(1) region and a stationary peripheral stalk. During catalysis, ATP synthesis in the catalytic domain of F(1) is coupled via a rotary mechanism of the central stalk subunits to proton translocation. In vivo, can only synthesize ATP although its ATP hydrolase activity can be activated artificially in vitro. Part of the complex F(0) domain. The protein is ATP synthase F(0) complex subunit 8 of Mammuthus primigenius (Siberian woolly mammoth).